A 122-amino-acid chain; its full sequence is Large-conductance mechanosensitive channel (122 aa).

2 helical membrane passes run 14-34 (VLDLAVGVIIGAAFTALVKSL) and 67-87 (GAFLNDVINFIITAFVIFILI).

The protein belongs to the MscL family. In terms of assembly, homopentamer.

The protein localises to the cell membrane. Its function is as follows. Channel that opens in response to stretch forces in the membrane lipid bilayer. May participate in the regulation of osmotic pressure changes within the cell. In Lactococcus lactis subsp. lactis (strain IL1403) (Streptococcus lactis), this protein is Large-conductance mechanosensitive channel.